We begin with the raw amino-acid sequence, 424 residues long: Appressorium protein ROW1 (424 aa).

The N-terminal stretch at Met-1–Ala-21 is a signal peptide. Disordered regions lie at residues Ala-19 to Lys-54, Ala-69 to Thr-90, Ser-278 to Val-304, and Ser-327 to Ala-398. Topologically, residues Gln-22–Ser-403 are extracellular. The span at Thr-37–Lys-54 shows a compositional bias: polar residues. Low complexity-rich tracts occupy residues Ala-295–Val-304 and Ser-327–Ser-347. The span at Ser-362–Ser-382 shows a compositional bias: gly residues. The span at Ser-383–Ala-398 shows a compositional bias: low complexity. A helical membrane pass occupies residues Ser-404–Leu-424.

Its subcellular location is the cell membrane. It is found in the secreted. Its function is as follows. Plays a role in the formation of the appressorium, a specialized infection structure with the purpose of penetrating the host surface, and is required for proper remodeling of the appressorium wall and vesicle secretion. The protein is Appressorium protein ROW1 of Mycosarcoma maydis (Corn smut fungus).